We begin with the raw amino-acid sequence, 228 residues long: MNNIIIKCINLNKSYKDGDFTYTILKNISFQLNKGDIAGIIGKSGSGKTTFLHLLAGLENPTSGDILFNGRLFSSMSSNKMSKFRNIELGFIYQFHHLMLDFNILENVSMPLLISNKSKKDSEEIAYNMLKKFNLEDKIKKYPSELSGGERQRVAVARAFINKPSLIIADEPTGNLDEDNTNIIFNLITELNSDYNTSFIIATHDPTLIKKIPVLFKIENNQIFNYES.

Residues 6–228 (IKCINLNKSY…ENNQIFNYES (223 aa)) enclose the ABC transporter domain. Residue 42 to 49 (GKSGSGKT) participates in ATP binding.

The protein belongs to the ABC transporter superfamily. Lipoprotein translocase (TC 3.A.1.125) family.

Its subcellular location is the cell inner membrane. Functionally, usually LolD forms an ABC transporter complex with LolC and LolE involved in the translocation of lipoprotein, in an ATP-dependent manner. However, LolE is certainly not functional as it is frameshifted. This chain is Lipoprotein-releasing system ATP-binding protein LolD, found in Buchnera aphidicola subsp. Acyrthosiphon pisum (strain APS) (Acyrthosiphon pisum symbiotic bacterium).